Here is a 264-residue protein sequence, read N- to C-terminus: Phosphatidylglycerol--prolipoprotein diacylglyceryl transferase (264 aa).

Transmembrane regions (helical) follow at residues 14-34, 57-77, 89-109, 127-147, 176-196, 202-222, and 235-255; these read VGPL…LLFM, LLLY…VLFF, ILAI…VLVA, FIAP…FING, QLYQ…VYSA, KAVS…AEFF, and LGLS…VGLL. A 1,2-diacyl-sn-glycero-3-phospho-(1'-sn-glycerol) is bound at residue arginine 140.

This sequence belongs to the Lgt family.

Its subcellular location is the cell inner membrane. It catalyses the reaction L-cysteinyl-[prolipoprotein] + a 1,2-diacyl-sn-glycero-3-phospho-(1'-sn-glycerol) = an S-1,2-diacyl-sn-glyceryl-L-cysteinyl-[prolipoprotein] + sn-glycerol 1-phosphate + H(+). It functions in the pathway protein modification; lipoprotein biosynthesis (diacylglyceryl transfer). Functionally, catalyzes the transfer of the diacylglyceryl group from phosphatidylglycerol to the sulfhydryl group of the N-terminal cysteine of a prolipoprotein, the first step in the formation of mature lipoproteins. The polypeptide is Phosphatidylglycerol--prolipoprotein diacylglyceryl transferase (Aromatoleum aromaticum (strain DSM 19018 / LMG 30748 / EbN1) (Azoarcus sp. (strain EbN1))).